We begin with the raw amino-acid sequence, 245 residues long: Photosystem II protein PSBS2 (245 aa).

Residues 1 to 25 constitute a chloroplast transit peptide; sequence MAMTLSTKAFAQRGVSARKNTVRVY. 4 helical membrane passes run 72–92, 108–128, 185–205, and 217–237; these read LFVG…EILT, GIEV…AAVL, LGFA…LAQF, and EFGL…EGSG.

The protein belongs to the ELIP/psbS family.

Its subcellular location is the plastid. The protein resides in the chloroplast thylakoid membrane. Functionally, required for non-photochemical quenching (NPQ), a mechanism that converts and dissipates the harmful excess absorbed light energy into heat and protect the photosynthetic apparatus from photo-oxidative damage. Seems involved in the activation of NPQ, possibly by promoting conformational changes required for activation of LHCSR3-dependent quenching in the antenna of photosystem II (PSII). This Chlamydomonas reinhardtii (Chlamydomonas smithii) protein is Photosystem II protein PSBS2.